The primary structure comprises 64 residues: Large ribosomal subunit protein bL35 (64 aa).

Over residues 1-14 (MKQKTHKGAAKRIK) the composition is skewed to basic residues. A disordered region spans residues 1 to 50 (MKQKTHKGAAKRIKISGSGKLRREQANRRHLLEGKPSKRTRRLKGTEDVA). A compositionally biased stretch (basic and acidic residues) spans 21–36 (LRREQANRRHLLEGKP).

Belongs to the bacterial ribosomal protein bL35 family.

This Corynebacterium jeikeium (strain K411) protein is Large ribosomal subunit protein bL35.